Reading from the N-terminus, the 191-residue chain is UPF0149 protein plu3602 (191 aa).

This sequence belongs to the UPF0149 family.

The chain is UPF0149 protein plu3602 from Photorhabdus laumondii subsp. laumondii (strain DSM 15139 / CIP 105565 / TT01) (Photorhabdus luminescens subsp. laumondii).